We begin with the raw amino-acid sequence, 397 residues long: Putative gustatory receptor 93c (397 aa).

The Cytoplasmic portion of the chain corresponds to 1-12 (MIERLKKVSLPA). A helical membrane pass occupies residues 13-33 (LSAFILFCSCHYGRILGVICF). Residues 34–87 (DIGQRTSDDSLVVRNRHQFKWFCLSCRLISVTAVCCFCAPYVADIEDPYERLLQ) lie on the Extracellular side of the membrane. The helical transmembrane segment at 88–108 (CFRLSASLICGICIIVVQVCY) threads the bilayer. At 109–141 (EKELLRMIISFLRLFRRVRRLSSLKRIGFGGKR) the chain is on the cytoplasmic side. A helical transmembrane segment spans residues 142–162 (EFFLLLFKFICLVYELYSEIC). Over 163 to 179 (QLWHLPDSLSLFATLCE) the chain is Extracellular. A helical transmembrane segment spans residues 180–200 (IFLEIGSLMIIHIGFVGYLSV). The Cytoplasmic segment spans residues 201–266 (AALYSEVNSF…RTFHRLLELP (66 aa)). Residues 267–287 (VLIILLGKIFATTILSYEVII) form a helical membrane-spanning segment. At 288-295 (RPELYARK) the chain is on the extracellular side. Residues 296–316 (IGMWGLVVKSFADVILLTLAV) form a helical membrane-spanning segment. At 317–371 (HEAVSSSRMMRRLSLENFPITDHKAWHMKWEMFLSRLNFFEFRVRPLGLFEVSNE) the chain is on the cytoplasmic side. Residues 372–392 (VILLFLSSMITYFTYVVQYGI) form a helical membrane-spanning segment. The Extracellular segment spans residues 393 to 397 (QTNRL).

The protein belongs to the insect chemoreceptor superfamily. Gustatory receptor (GR) family. Gr93a subfamily. As to expression, in larvae, is expressed in neurons of the posterior pharyngeal sense organ.

The protein localises to the cell membrane. In terms of biological role, probable gustatory receptor which mediates acceptance or avoidance behavior, depending on its substrates. This Drosophila melanogaster (Fruit fly) protein is Putative gustatory receptor 93c (Gr93c).